We begin with the raw amino-acid sequence, 84 residues long: Beta-cardiotoxin CTX27 (84 aa).

A signal peptide spans 1–21; that stretch reads MKTLLLTLVVVTIVCLDLGYT. 4 disulfides stabilise this stretch: cysteine 24–cysteine 43, cysteine 36–cysteine 61, cysteine 65–cysteine 76, and cysteine 77–cysteine 82.

It belongs to the three-finger toxin family. Short-chain subfamily. Aminergic toxin sub-subfamily. Expressed by the venom gland.

The protein localises to the secreted. In terms of biological role, acts as a beta-blocker by binding to beta-1 and beta-2 adrenergic receptors (ADRB1 and ADRB2). It dose-dependently decreases the heart rate (bradycardia), whereas conventional cardiotoxins increases it. At 100 mg/kg, intraperitoneal injection into mice provokes labored breathing, impaired locomotion, lack of response to external stimuli, and death (after 30 minutes). The chain is Beta-cardiotoxin CTX27 from Ophiophagus hannah (King cobra).